Here is a 600-residue protein sequence, read N- to C-terminus: Estrogen receptor (600 aa).

Positions 1-189 (MTMTLHTKAS…IMESAKETRY (189 aa)) are modulating (transactivation AF-1); mediates interaction with MACROD1. A glycan (O-linked (GlcNAc) serine) is linked at Ser10. Residues 35–47 (MERALGEVYVDNS) are required for interaction with NCOA1. The interaction with DDX5; self-association stretch occupies residues 35-179 (MERALGEVYV…LSSSSEKGNM (145 aa)). 2 positions are modified to phosphoserine; by CDK2: Ser109 and Ser111. Phosphoserine is present on Ser123. A disordered region spans residues 148-177 (DTGPPAFYRSNSDNRRQNGRERLSSSSEKG). Positions 159 to 170 (SDNRRQNGRERL) are enriched in basic and acidic residues. At Ser172 the chain carries Phosphoserine; by CK2. 2 NR C4-type zinc fingers span residues 190-210 (CAVC…CEGC) and 226-250 (CPAT…LRKC). A DNA-binding region (nuclear receptor) is located at residues 190 to 255 (CAVCNDYASG…RLRKCYEVGM (66 aa)). Positions 190–315 (CAVCNDYASG…TKKNSPALSL (126 aa)) are mediates interaction with DNTTIP2. The hinge stretch occupies residues 256 to 315 (MKGGIRKDRRGGRMLKHKRQRDDLEGRNEMGTSGDMRAANLWPSPLVIKHTKKNSPALSL). Asymmetric dimethylarginine; by PRMT1 is present on Arg265. The interval 267-600 (GRMLKHKRQR…PEAEGFPNTI (334 aa)) is interaction with AKAP13. Residues 269-600 (MLKHKRQRDD…PEAEGFPNTI (332 aa)) are self-association. Residues 316 to 552 (TADQMVSALL…DLLLEMLDAH (237 aa)) enclose the NR LBD domain. Positions 316-600 (TADQMVSALL…PEAEGFPNTI (285 aa)) are transactivation AF-2. The 17beta-estradiol site is built by Glu358 and Arg399. Cys452 carries the S-palmitoyl cysteine lipid modification. His529 is a binding site for 17beta-estradiol. Tyr542 carries the phosphotyrosine; by Tyr-kinases modification. The tract at residues 558–581 (ASRMGVPPEEPSQSQLTTTSSTSA) is disordered. The span at 569–581 (SQSQLTTTSSTSA) shows a compositional bias: low complexity. A glycan (O-linked (GlcNAc) threonine) is linked at Thr576.

The protein belongs to the nuclear hormone receptor family. NR3 subfamily. As to quaternary structure, interacts with BCAS3. Binds DNA as a homodimer. Can form a heterodimer with ESR2. Interacts with coactivator NCOA5. Interacts with PELP1, the interaction is enhanced by 17-beta-estradiol; the interaction increases ESR1 transcriptional activity. Interacts with NCOA7; the interaction is ligand-inducible. Interacts with AKAP13, CUEDC2, HEXIM1, KDM5A, MAP1S, SMARD1, and UBE1C. Interacts with MUC1; the interaction is stimulated by 7 beta-estradiol (E2) and enhances ESR1-mediated transcription. Interacts with DNTTIP2, and UIMC1. Interacts with KMT2D/MLL2. Interacts with ATAD2; the interaction is enhanced by estradiol. Interacts with KIF18A and LDB1. Interacts with RLIM (via its C-terminus). Interacts with MACROD1. Interacts with SH2D4A and PLCG. Interacts with SH2D4A; the interaction blocks binding to PLCG and inhibits estrogen-induced cell proliferation. Interacts with DYNLL1. Interacts with CCDC62; the interaction requires estradiol and appears to enhance the transcription of target genes. Interacts with NR2C1; the interaction prevents homodimerization of ESR1 and suppresses its transcriptional activity and cell growth. Interacts with DNAAF4. Interacts with PRMT2. Interacts with RBFOX2. Interacts with EP300; the interaction is estrogen-dependent and enhanced by CITED1. Interacts with CITED1; the interaction is estrogen-dependent. Interacts with FAM120B, FOXL2, PHB2 and SLC30A9. Interacts with coactivators NCOA3 and NCOA6. Interacts with STK3/MST2 only in the presence of SAV1 and vice-versa. Binds to CSNK1D. Interacts with NCOA2; NCOA2 can interact with ESR1 AF-1 and AF-2 domains simultaneously and mediate their transcriptional synergy. Interacts with DDX5. Interacts with NCOA1; the interaction seems to require a self-association of N-terminal and C-terminal regions. Interacts with ZNF366, DDX17, NFKB1, RELA, SP1 and SP3. Interacts with NRIP1. Interacts with GPER1; the interaction occurs in an estrogen-dependent manner. Interacts with TRIP4 (ufmylated); estrogen dependent. Interacts with LMTK3; the interaction phosphorylates ESR1 (in vitro) and protects it against proteasomal degradation. Interacts with CCAR2 (via N-terminus) in a ligand-independent manner. Interacts with ZFHX3. Interacts with SFR1 in a ligand-dependent and -independent manner. Interacts with DCAF13, LATS1 and DCAF1; regulates ESR1 ubiquitination and ubiquitin-mediated proteasomal degradation. Interacts (via DNA-binding domain) with POU4F2 (C-terminus); this interaction increases the estrogen receptor ESR1 transcriptional activity in a DNA- and ligand 17-beta-estradiol-independent manner. Interacts with ESRRB isoform 1. Interacts with UBE3A and WBP2. Interacts with GTF2B. Interacts with RBM39. In the absence of hormonal ligand, interacts with TACC1. Interacts with PI3KR1 or PI3KR2 and PTK2/FAK1. Interacts with SRC. Interacts with BAG1; the interaction is promoted in the absence of estradiol (17-beta-estradiol/E2). Interacts with and ubiquitinated by STUB1; the interaction is promoted in the absence of estradiol (17-beta-estradiol/E2). Interacts with NEDD8. Phosphorylated by cyclin A/CDK2 and CK1. Phosphorylation probably enhances transcriptional activity. Dephosphorylation at Ser-123 by PPP5C inhibits its transactivation activity. Phosphorylated by LMTK3 (in vitro). Post-translationally, ubiquitinated; regulated by LATS1 via DCAF1 it leads to ESR1 proteasomal degradation. Deubiquitinated by OTUB1. Ubiquitinated by STUB1/CHIP; in the CA1 hippocampal region following loss of endogenous circulating estradiol (17-beta-estradiol/E2). Ubiquitinated by UBR5, leading to its degradation: UBR5 specifically recognizes and binds ligand-bound ESR1 when it is not associated with coactivators (NCOAs). In presence of NCOAs, the UBR5-degron is not accessible, preventing its ubiquitination and degradation. In terms of processing, palmitoylated at Cys-452 by ZDHHC7 and ZDHHC21. This modification is required for plasma membrane targeting and for rapid intracellular signaling via ERK and AKT kinases and cAMP generation, but not for signaling mediated by the nuclear hormone receptor. Dimethylated by PRMT1 at Arg-265. The methylation may favor cytoplasmic localization. Demethylated by JMJD6 at Arg-265. As to expression, expressed in the CA1 region of the hippocampus, expression decreases with age (at protein level). Expressed in the uterus (at protein level).

The protein localises to the nucleus. It is found in the cytoplasm. It localises to the golgi apparatus. The protein resides in the cell membrane. In terms of biological role, nuclear hormone receptor. The steroid hormones and their receptors are involved in the regulation of eukaryotic gene expression and affect cellular proliferation and differentiation in target tissues. Ligand-dependent nuclear transactivation involves either direct homodimer binding to a palindromic estrogen response element (ERE) sequence or association with other DNA-binding transcription factors, such as AP-1/c-Jun, c-Fos, ATF-2, Sp1 and Sp3, to mediate ERE-independent signaling. Ligand binding induces a conformational change allowing subsequent or combinatorial association with multiprotein coactivator complexes through LXXLL motifs of their respective components. Mutual transrepression occurs between the estrogen receptor (ER) and NF-kappa-B in a cell-type specific manner. Decreases NF-kappa-B DNA-binding activity and inhibits NF-kappa-B-mediated transcription from the IL6 promoter and displace RELA/p65 and associated coregulators from the promoter. Recruited to the NF-kappa-B response element of the CCL2 and IL8 promoters and can displace CREBBP. Present with NF-kappa-B components RELA/p65 and NFKB1/p50 on ERE sequences. Can also act synergistically with NF-kappa-B to activate transcription involving respective recruitment adjacent response elements; the function involves CREBBP. Can activate the transcriptional activity of TFF1. Also mediates membrane-initiated estrogen signaling involving various kinase cascades. Essential for MTA1-mediated transcriptional regulation of BRCA1 and BCAS3. Maintains neuronal survival in response to ischemic reperfusion injury when in the presence of circulating estradiol (17-beta-estradiol/E2). In Rattus norvegicus (Rat), this protein is Estrogen receptor (Esr1).